The primary structure comprises 217 residues: Ras-related protein Rab-19 (217 aa).

GTP is bound by residues Ser26, Val28, Gly29, Lys30, Thr31, Cys32, Tyr42, Ser43, Glu44, Ser45, and Thr49. Thr31 provides a ligand contact to Mg(2+). Residues Ser39 to Phe54 carry the Switch 1 motif. 2 residues coordinate Mg(2+): Thr49 and Asp72. The Switch 2 signature appears at Ala74–Ser89. The GTP site is built by Gly75, Asn130, Lys131, Asp133, Ser161, Ala162, and Lys163. S-geranylgeranyl cysteine attachment occurs at residues Cys215 and Cys217. Cys217 carries the cysteine methyl ester modification.

This sequence belongs to the small GTPase superfamily. Rab family. Requires Mg(2+) as cofactor.

Its subcellular location is the cell membrane. The enzyme catalyses GTP + H2O = GDP + phosphate + H(+). Its activity is regulated as follows. Regulated by guanine nucleotide exchange factors (GEFs) which promote the exchange of bound GDP for free GTP. Regulated by GTPase activating proteins (GAPs) which increase the GTP hydrolysis activity. Inhibited by GDP dissociation inhibitors (GDIs). In terms of biological role, the small GTPases Rab are key regulators of intracellular membrane trafficking, from the formation of transport vesicles to their fusion with membranes. Rabs cycle between an inactive GDP-bound form and an active GTP-bound form that is able to recruit to membranes different set of downstream effectors directly responsible for vesicle formation, movement, tethering and fusion. The chain is Ras-related protein Rab-19 from Rattus norvegicus (Rat).